Reading from the N-terminus, the 344-residue chain is tRNA N6-adenosine threonylcarbamoyltransferase (344 aa).

Residues His-111 and His-115 each coordinate Fe cation. Substrate-binding positions include 136 to 140, Asp-169, Gly-182, and Asn-279; that span reads LVSGG. Asp-307 is a Fe cation binding site.

It belongs to the KAE1 / TsaD family. Fe(2+) is required as a cofactor.

Its subcellular location is the cytoplasm. The catalysed reaction is L-threonylcarbamoyladenylate + adenosine(37) in tRNA = N(6)-L-threonylcarbamoyladenosine(37) in tRNA + AMP + H(+). In terms of biological role, required for the formation of a threonylcarbamoyl group on adenosine at position 37 (t(6)A37) in tRNAs that read codons beginning with adenine. Is involved in the transfer of the threonylcarbamoyl moiety of threonylcarbamoyl-AMP (TC-AMP) to the N6 group of A37, together with TsaE and TsaB. TsaD likely plays a direct catalytic role in this reaction. This Mannheimia succiniciproducens (strain KCTC 0769BP / MBEL55E) protein is tRNA N6-adenosine threonylcarbamoyltransferase.